An 88-amino-acid chain; its full sequence is Small ribosomal subunit protein bS20 (88 aa).

It belongs to the bacterial ribosomal protein bS20 family.

In terms of biological role, binds directly to 16S ribosomal RNA. The polypeptide is Small ribosomal subunit protein bS20 (Legionella pneumophila (strain Paris)).